The following is a 246-amino-acid chain: tRNA pseudouridine synthase A (246 aa).

The active-site Nucleophile is D52. Residue Y111 coordinates substrate.

It belongs to the tRNA pseudouridine synthase TruA family. Homodimer.

The enzyme catalyses uridine(38/39/40) in tRNA = pseudouridine(38/39/40) in tRNA. In terms of biological role, formation of pseudouridine at positions 38, 39 and 40 in the anticodon stem and loop of transfer RNAs. The sequence is that of tRNA pseudouridine synthase A from Borreliella burgdorferi (strain ZS7) (Borrelia burgdorferi).